A 111-amino-acid chain; its full sequence is Cytochrome c6 (111 aa).

The N-terminal stretch at 1-25 is a signal peptide; that stretch reads MKRLLSLIFLVFVFFAVMLTPPALA. 4 residues coordinate heme c: C39, C42, H43, and M83.

The protein belongs to the cytochrome c family. PetJ subfamily. Monomer. Binds 1 heme c group covalently per subunit.

The protein localises to the cellular thylakoid lumen. Functionally, functions as an electron carrier between membrane-bound cytochrome b6-f and photosystem I in oxygenic photosynthesis. The polypeptide is Cytochrome c6 (Rippkaea orientalis (strain PCC 8801 / RF-1) (Cyanothece sp. (strain PCC 8801))).